The primary structure comprises 571 residues: RUN and FYVE domain-containing protein 4 (571 aa).

An RUN domain is found at 33–166 (TDTSAELHRL…VAFELDLQQP (134 aa)). The disordered stretch occupies residues 174-207 (MFSESRCSSSTQTQGRRPRKNKDAPKKIPAAYGG). Polar residues predominate over residues 178-188 (SRCSSSTQTQG). Residues 408 to 481 (EVSLQDEIKS…ERRDAMYQEE (74 aa)) are a coiled coil. The segment at 474 to 567 (RDAMYQEELG…CCPPCAQGRE (94 aa)) adopts an FYVE-type zinc-finger fold. Zn(2+)-binding residues include Cys521, Cys524, Cys537, Cys540, Cys545, Cys548, Cys559, and Cys562.

Forms homodimers (via coiled coil domain). Interacts with RAB7A. Forms a ternary complex with RAB7A and LAMP2; the interaction with RAB7A is mediated by RUFY4 (via RUN and coiled coil domains). Interacts with GTP-, but not GDP-bound ARL8A and ARL8B. Interacts with dynactin/DCTN1 and the dynein intermediate chain DYNC1I1/2.

The protein resides in the cytoplasmic vesicle. It localises to the autophagosome. Its subcellular location is the lysosome. In terms of biological role, ARL8 effector that promotes the coupling of endolysosomes to dynein-dynactin for retrograde transport along microtubules. Acts by binding both GTP-bound ARL8 and dynein-dynactin. In nonneuronal cells, promotes concentration of endolysosomes in the juxtanuclear area. In hippocampal neurons, drives retrograde transport of endolysosomes from the axon to the soma. Positive regulator of macroautophagy in dendritic cells. Increases autophagic flux, probably by stimulating both autophagosome formation and facilitating tethering with lysosomes. Binds to phosphatidylinositol 3-phosphate (PtdIns3P) through its FYVE-type zinc finger. Positive regulator of osteosclast bone-resorbing activity, possibly by promoting late endosome-lysosome fusion by acting as an adapter protein between RAB7A on late endosomes and LAMP2 on primary lysosomes. The sequence is that of RUN and FYVE domain-containing protein 4 (RUFY4) from Homo sapiens (Human).